The chain runs to 166 residues: Cytochrome b (166 aa).

A run of 4 helical transmembrane segments spans residues 15–35 (FKDI…VLIN), 77–97 (LGGV…PFYN), 109–129 (INQI…WIGA), and 136–156 (YVLL…INPL).

The protein belongs to the cytochrome b family. As to quaternary structure, the main subunits of complex b-c1 are: cytochrome b, cytochrome c1 and the Rieske protein. It depends on heme as a cofactor.

It is found in the mitochondrion inner membrane. In terms of biological role, component of the ubiquinol-cytochrome c reductase complex (complex III or cytochrome b-c1 complex) that is part of the mitochondrial respiratory chain. The b-c1 complex mediates electron transfer from ubiquinol to cytochrome c. Contributes to the generation of a proton gradient across the mitochondrial membrane that is then used for ATP synthesis. The sequence is that of Cytochrome b (mt:Cyt-b) from Drosophila subobscura (Fruit fly).